We begin with the raw amino-acid sequence, 565 residues long: Putative ribonucleoside-diphosphate reductase large subunit (565 aa).

Substrate-binding positions include serine 60, serine 74–cysteine 75, glycine 103, asparagine 256–glutamate 260, and proline 400–serine 404. A disulfide bridge links cysteine 75 with cysteine 273. Asparagine 256 serves as the catalytic Proton acceptor. The active-site Cysteine radical intermediate is the cysteine 258. The active-site Proton acceptor is glutamate 260.

The protein belongs to the ribonucleoside diphosphate reductase large chain family. As to quaternary structure, heterotetramer composed of a homodimer of the large subunit (R1) and a homodimer of the small subunit (R2). Larger multisubunit protein complex are also active, composed of (R1)n(R2)n.

The enzyme catalyses a 2'-deoxyribonucleoside 5'-diphosphate + [thioredoxin]-disulfide + H2O = a ribonucleoside 5'-diphosphate + [thioredoxin]-dithiol. Its activity is regulated as follows. Under complex allosteric control mediated by deoxynucleoside triphosphates and ATP binding. The type of nucleotide bound at the specificity site determines substrate preference. It seems probable that ATP makes the enzyme reduce CDP and UDP, dGTP favors ADP reduction and dTTP favors GDP reduction. In terms of biological role, ribonucleoside-diphosphate reductase holoenzyme provides the precursors necessary for viral DNA synthesis. Allows virus growth in non-dividing cells. Catalyzes the biosynthesis of deoxyribonucleotides from the corresponding ribonucleotides. The chain is Putative ribonucleoside-diphosphate reductase large subunit from Frog virus 3 (isolate Goorha) (FV-3).